The primary structure comprises 356 residues: MGLLRIMMPPKLQLLAVLTFGVLMLFLENQIQNLEESREKLERAIARHEVREIEQRHSMDGSRQEIALDDDEDILIIYNRVPKTASTSFTNIAYDLCAKNKYHVLHINTTKNNPVMSLQDQVRFVKNVSSWREMKPGFYHGHVSFLDFTKFGVKKKPIYINVIRDPIERLVSYYYFLRFGDDYRPGLRRRKQGDKKTFDECVAAGGSDCAPEKLWLQIPFFCGHSSECWNVGSRWALDQAKYNLVNEYFLVGVTEELEDFIMLLEAALPRFFRGATELYRSGKKSHLRKTTEKKAPSKETTAKLQQSDIWKMENEFYEFALEQFQFVRAHAVREKDGELYVLAPNFFYEKIYPKSN.

Residues M1 to K11 lie on the Cytoplasmic side of the membrane. Residues L12–E28 form a helical; Signal-anchor for type II membrane protein membrane-spanning segment. Residues M24–R51 adopt a coiled-coil conformation. Over N29–N356 the chain is Lumenal. K83, T84, A85, S86, T87, and S88 together coordinate adenosine 3',5'-bisphosphate. N108 and N127 each carry an N-linked (GlcNAc...) asparagine glycan. Residues H140 and H142 contribute to the active site. Adenosine 3',5'-bisphosphate contacts are provided by R164 and S172. 2 disulfides stabilise this stretch: C201-C209 and C222-C228. Positions 279, 285, 290, and 293 each coordinate adenosine 3',5'-bisphosphate.

It belongs to the sulfotransferase 3 family. Homotrimer.

The protein resides in the golgi apparatus membrane. Catalyzes the transfer of a sulfo group from 3'-phospho-5'-adenylyl sulfate (PAPS) to the 2-OH position of iduronic acid (IdoA) or glucuronic acid (GlcA) within the heparan sulfate (HS) chain and participates in HS biosynthesis. This Xenopus laevis (African clawed frog) protein is Heparan sulfate 2-O-sulfotransferase 1.